The sequence spans 142 residues: Large ribosomal subunit protein uL13 (142 aa).

The protein belongs to the universal ribosomal protein uL13 family. Part of the 50S ribosomal subunit.

Its function is as follows. This protein is one of the early assembly proteins of the 50S ribosomal subunit, although it is not seen to bind rRNA by itself. It is important during the early stages of 50S assembly. The protein is Large ribosomal subunit protein uL13 of Pseudomonas putida (strain ATCC 700007 / DSM 6899 / JCM 31910 / BCRC 17059 / LMG 24140 / F1).